Reading from the N-terminus, the 607-residue chain is Pescadillo homolog (607 aa).

The tract at residues 301-341 is disordered; it reads ANVVEQSEKTTEDADEEPETEENLDEFKPADGADNEDSKSL. Acidic residues predominate over residues 313–324; sequence DADEEPETEENL. The segment covering 325-339 has biased composition (basic and acidic residues); it reads DEFKPADGADNEDSK. One can recognise a BRCT domain in the interval 348-441; that stretch reads SNTSLFSNFT…ILERTDLYAC (94 aa). Residues 497–604 adopt a coiled-coil conformation; sequence ENVEQIDDAE…RDIEKRKKLK (108 aa). Positions 531-607 are disordered; it reads QNSKSAKKTK…EKRKKLKVEN (77 aa). Basic and acidic residues-rich tracts occupy residues 544 to 561 and 595 to 607; these read RDTL…KELS and RDIE…KVEN.

It belongs to the pescadillo family. As to quaternary structure, component of the NOP7 complex, composed of erb1/SPBC4F6.13c, ppp1/SPBC19F5.05c and ytm1/SPAC890.04c. Within the NOP7 complex erb1/SPBC4F6.13c appears to interact directly with ppp1/SPBC19F5.05c and ytm1/SPAC890.04c. The NOP7 complex also associates with the 66S pre-ribosome.

Its subcellular location is the nucleus. It localises to the nucleoplasm. It is found in the nucleolus. In terms of biological role, component of the NOP7 complex, which is required for maturation of the 25S and 5.8S ribosomal RNAs and formation of the 60S ribosome. The sequence is that of Pescadillo homolog (ppp1) from Schizosaccharomyces pombe (strain 972 / ATCC 24843) (Fission yeast).